The chain runs to 208 residues: Thymidylate kinase (208 aa).

11-18 (GGEGAGKS) is an ATP binding site.

This sequence belongs to the thymidylate kinase family.

The catalysed reaction is dTMP + ATP = dTDP + ADP. Phosphorylation of dTMP to form dTDP in both de novo and salvage pathways of dTTP synthesis. In Caulobacter vibrioides (strain ATCC 19089 / CIP 103742 / CB 15) (Caulobacter crescentus), this protein is Thymidylate kinase (tmk).